A 338-amino-acid chain; its full sequence is tRNA N6-adenosine threonylcarbamoyltransferase (338 aa).

The Fe cation site is built by histidine 111 and histidine 115. Substrate contacts are provided by residues 134-138 (LLSGG), aspartate 167, glycine 180, and asparagine 275. Aspartate 304 serves as a coordination point for Fe cation.

This sequence belongs to the KAE1 / TsaD family. It depends on Fe(2+) as a cofactor.

It localises to the cytoplasm. It catalyses the reaction L-threonylcarbamoyladenylate + adenosine(37) in tRNA = N(6)-L-threonylcarbamoyladenosine(37) in tRNA + AMP + H(+). In terms of biological role, required for the formation of a threonylcarbamoyl group on adenosine at position 37 (t(6)A37) in tRNAs that read codons beginning with adenine. Is involved in the transfer of the threonylcarbamoyl moiety of threonylcarbamoyl-AMP (TC-AMP) to the N6 group of A37, together with TsaE and TsaB. TsaD likely plays a direct catalytic role in this reaction. The chain is tRNA N6-adenosine threonylcarbamoyltransferase from Leptospira borgpetersenii serovar Hardjo-bovis (strain JB197).